A 408-amino-acid chain; its full sequence is UDP-N-acetylglucosamine--dolichyl-phosphate N-acetylglucosaminephosphotransferase (408 aa).

At 1-10 (MWAFPELPMP) the chain is on the lumenal side. The chain crosses the membrane as a helical span at residues 11–38 (LLVNLIGSLMGFVATVTLIPAFRGHFIA). Over 39–58 (ARLCGQDLNKSSREQIPESQ) the chain is Cytoplasmic. UDP-N-acetyl-alpha-D-glucosamine is bound by residues 44–46 (QDL) and Glu56. Residues 59–78 (GVISGAVFLIILFCFIPFPF) traverse the membrane as a helical segment. At 79–91 (LNCFVEQQCKAFP) the chain is on the lumenal side. The chain crosses the membrane as a helical span at residues 92–118 (HHEFVALIGALLAICCMIFLGFADDVL). Residues 119–121 (NLR) lie on the Cytoplasmic side of the membrane. Residues 122-143 (WRHKLLLPTAASLPLLMVYFTN) traverse the membrane as a helical segment. Lys125 is a binding site for dolichyl phosphate. Residues 144 to 166 (FGNTTIVVPKPLRPILGLHLDLG) lie on the Lumenal side of the membrane. An N-linked (GlcNAc...) asparagine glycan is attached at Asn146. Residues 167 to 186 (ILYYVYMGLLAVFCTNAINI) form a helical membrane-spanning segment. 178 to 186 (VFCTNAINI) is a binding site for dolichyl phosphate. Residue Asn185 participates in Mg(2+) binding. Residues 187–192 (LAGING) lie on the Cytoplasmic side of the membrane. Position 191 (Asn191) interacts with UDP-N-acetyl-alpha-D-glucosamine. The chain crosses the membrane as a helical span at residues 193–213 (LEAGQSLVISASIIVFNLVEL). Over 214-218 (DGDYR) the chain is Lumenal. Residues 219–242 (DDHIFSLYFMIPFFFTTLGLLYHN) form a helical membrane-spanning segment. Residues 243 to 250 (WYPSRVFV) are Cytoplasmic-facing. A helical membrane pass occupies residues 251–269 (GDTFCYFAGMTFAVVGILG). Asp252 is a Mg(2+) binding site. Over 270–271 (HF) the chain is Lumenal. Residues 272–293 (SKTMLLFFMPQVFNFLYSLPQL) traverse the membrane as a helical segment. Residues 294–375 (LHIIPCPRHR…LLLKVFGPMH (82 aa)) are Cytoplasmic-facing. 301–303 (RHR) is a binding site for UDP-N-acetyl-alpha-D-glucosamine. The chain crosses the membrane as a helical span at residues 376–400 (ERNLTLLLLLLQVVGSAVTFSIRYQ). Residues 401–408 (LVRLFYDV) are Lumenal-facing.

It belongs to the glycosyltransferase 4 family. In terms of assembly, homodimer. The cofactor is Mg(2+).

The protein localises to the endoplasmic reticulum membrane. It carries out the reaction a di-trans,poly-cis-dolichyl phosphate + UDP-N-acetyl-alpha-D-glucosamine = an N-acetyl-alpha-D-glucosaminyl-diphospho-di-trans,poly-cis-dolichol + UMP. It participates in protein modification; protein glycosylation. Inhibited by natural nucleoside antibiotic tunicamycin, which acts as a structural analog and competitor of UDP-GlcNAc. Activated by Man-P-Dol. Activated by manganese. Inhibited by diumycin. In terms of biological role, UDP-N-acetylglucosamine--dolichyl-phosphate N-acetylglucosaminephosphotransferase that operates in the biosynthetic pathway of dolichol-linked oligosaccharides, the glycan precursors employed in protein asparagine (N)-glycosylation. The assembly of dolichol-linked oligosaccharides begins on the cytosolic side of the endoplasmic reticulum membrane and finishes in its lumen. The sequential addition of sugars to dolichol pyrophosphate produces dolichol-linked oligosaccharides containing fourteen sugars, including two GlcNAcs, nine mannoses and three glucoses. Once assembled, the oligosaccharide is transferred from the lipid to nascent proteins by oligosaccharyltransferases. Catalyzes the initial step of dolichol-linked oligosaccharide biosynthesis, transfering GlcNAc-1-P from cytosolic UDP-GlcNAc onto the carrier lipid dolichyl phosphate (P-dolichol), yielding GlcNAc-P-P-dolichol embedded in the cytoplasmic leaflet of the endoplasmic reticulum membrane. The sequence is that of UDP-N-acetylglucosamine--dolichyl-phosphate N-acetylglucosaminephosphotransferase from Bos taurus (Bovine).